Consider the following 407-residue polypeptide: MRILAMTRAHNAGRTLAATLDSLAVFSDDIYVIDDRSTDDTAEILANHPAVTNVVRARPDLPPTPWLIPESAGLELLYRMADFCRPDWVMMVDADWLVETDIDLRAVLARTPDDIVALMCPMVSRWDDPEYPDLIPVMGTAEALRGPLWRWYPGLRAGGKLMHNPHWPANITDHGRIGQLPGVRLVHSGWSTLAERILRVEHYLRLDPDYRFNFGVAYDRSLLFGYALDEVDLLKADYRRRIRGDFDPLEPGGRLPIDREPRAIGRGYGPHAGGFHPGVDFATDPGTPVYAVASGAVSAIDEVDGLVSLTIARCELDVVYVFRPGDEGRLVLGDRIAAGAQLGTIGAQGESADGYLHFEVRTQDGHVNPVRYLANMGLRPWPPPGRLRAVSGSYPPATPCTITAEDR.

The N-terminal stretch at 1 to 27 (MRILAMTRAHNAGRTLAATLDSLAVFS) is a signal peptide.

This is an uncharacterized protein from Mycobacterium bovis (strain ATCC BAA-935 / AF2122/97).